The primary structure comprises 618 residues: MGFTLKSLEFLQGVEPFRIDENHENEGASEEEEVLISAETDAGMSLMLEWKMRLSEDSDQCTTCNCPVDFGDRAVLLEHYQSLFHRTNTLRKARNMTVYTEEDFEGIENSENDLTSSQTTIGLESDDEEFDALLLPANRSFFIKNGSVFSVPRNILHVGERDVSSVTFLRPFDCAIFLWNGGHFAAAMFENDKMTVQKSFHRYVARAKQGGVQSQHDSGGKGAAKSAGAQLRRYNEQKMKEEIQSIMSSWKSRLQKTPLLFIRCAAYHRNIFFEADAGIETRDDRIRTIPFETKRPNIDEISDCWQRLQQVSEHGAESDFRAEMLEVREKRKKLARKVAGKKRKDGGMQMICEWSDDDENEDISKEKKTHHIKVRTIKKPEETVVQWPRLDDEWRQKTYNYVRQDSVEALKEHLASLNEDVTSEANDYLRNAKIPPNRSTFLHVSAANDARKCLKYFLEEVNCDSSTKDGAGLPPYSSSANSDVKSIFIDYRVKNETAGNWARTHIPEPKKKVELTEEQEREQAERKKEKKARQKEKEKLKKEIAKRDVEEMEERQKYVNMSEREKRALAVDRRLAGLPPILRCHQCGVQLPPTPFQYSHYNFCSTSCVAEHRKANPQ.

The C2H2-type zinc-finger motif lies at 59–85; it reads DQCTTCNCPVDFGDRAVLLEHYQSLFH. The VLRF1 domain occupies 170-311; sequence RPFDCAIFLW…SDCWQRLQQV (142 aa). Q213 is a catalytic residue. ANK repeat units follow at residues 437-466 and 470-496; these read NRSTFLHVSAANDARKCLKYFLEEVNCDSS and GAGLPPYSSSANSDVKSIFIDYRVKNE. Residues 502-539 are disordered; sequence ARTHIPEPKKKVELTEEQEREQAERKKEKKARQKEKEK. Residues 505–515 are compositionally biased toward basic and acidic residues; sequence HIPEPKKKVEL. Residues 510-557 are a coiled coil; the sequence is KKKVELTEEQEREQAERKKEKKARQKEKEKLKKEIAKRDVEEMEERQK.

The protein belongs to the ANKZF1/VMS1 family. As to expression, in larval stages and in adults, expressed in intestinal cells, specific neurons in the head and the tail, and in the ventral nerve cord.

It localises to the cytoplasm. Its subcellular location is the mitochondrion. In terms of biological role, endonuclease that cleaves polypeptidyl-tRNAs downstream of the ribosome-associated quality control (RQC) pathway to release incompletely synthesized polypeptides for degradation. The RQC pathway disassembles aberrantly stalled translation complexes to recycle or degrade the constituent parts. Dispensable for viability and growth but is required for protection against oxidative stress and for wild-type life span. This is tRNA endonuclease vms-1 (vms-1) from Caenorhabditis elegans.